A 48-amino-acid polypeptide reads, in one-letter code: 4-carboxymuconolactone decarboxylase (48 aa).

The protein belongs to the carboxymuconolactone decarboxylase family.

It catalyses the reaction (R)-2-(carboxymethyl)-5-oxo-2,5-dihydro-2-furoate + H(+) = (4,5-dihydro-5-oxofuran-2-yl)-acetate + CO2. It functions in the pathway aromatic compound metabolism; beta-ketoadipate pathway; 5-oxo-4,5-dihydro-2-furylacetate from 3-carboxy-cis,cis-muconate: step 2/2. The sequence is that of 4-carboxymuconolactone decarboxylase from Pseudomonas putida (Arthrobacter siderocapsulatus).